Consider the following 123-residue polypeptide: MARYEEVSVSGFEEFHRAVEQHNGKTIFAYFTGSKDAGGKSWCPDCVQAEPVVREGLKHISEGCVFIYCQVGEKPYWKDPNNDFRKNLKVTAVPTLLKYGTPQKLVESECLQANLVEMLFSED.

A2 is subject to N-acetylalanine. Residues 41-123 (SWCPDCVQAE…NLVEMLFSED (83 aa)) enclose the Thioredoxin domain. Active-site nucleophile residues include C43 and C46. A disulfide bond links C43 and C46.

This sequence belongs to the thioredoxin family. In terms of assembly, interacts with TRXR1 and DYNLL1/DNCL1. In terms of processing, the oxidized protein is reduced by TRXR1. Ubiquitously expressed in cell lines.

It is found in the cytoplasm. Its function is as follows. Disulfide reductase. May participate in various redox reactions through the reversible oxidation of its active center dithiol to a disulfide and catalyze dithiol-disulfide exchange reactions. Modulates TNF-alpha signaling and NF-kappa-B activation. Has peroxidase activity and may contribute to the elimination of cellular hydrogen peroxide. In Homo sapiens (Human), this protein is Thioredoxin domain-containing protein 17 (TXNDC17).